A 345-amino-acid chain; its full sequence is Phenylalanine--tRNA ligase alpha subunit (345 aa).

A Mg(2+)-binding site is contributed by E259.

The protein belongs to the class-II aminoacyl-tRNA synthetase family. Phe-tRNA synthetase alpha subunit type 1 subfamily. In terms of assembly, tetramer of two alpha and two beta subunits. Requires Mg(2+) as cofactor.

Its subcellular location is the cytoplasm. The enzyme catalyses tRNA(Phe) + L-phenylalanine + ATP = L-phenylalanyl-tRNA(Phe) + AMP + diphosphate + H(+). In Lactococcus lactis subsp. cremoris (strain MG1363), this protein is Phenylalanine--tRNA ligase alpha subunit.